The chain runs to 227 residues: Uracil-DNA glycosylase (227 aa).

Asp-68 functions as the Proton acceptor in the catalytic mechanism.

It belongs to the uracil-DNA glycosylase (UDG) superfamily. UNG family.

It localises to the cytoplasm. It carries out the reaction Hydrolyzes single-stranded DNA or mismatched double-stranded DNA and polynucleotides, releasing free uracil.. Functionally, excises uracil residues from the DNA which can arise as a result of misincorporation of dUMP residues by DNA polymerase or due to deamination of cytosine. The chain is Uracil-DNA glycosylase from Mycolicibacterium paratuberculosis (strain ATCC BAA-968 / K-10) (Mycobacterium paratuberculosis).